The following is a 246-amino-acid chain: uncharacterized protein (246 aa).

Position 194 is a phosphoserine (serine 194).

This is an uncharacterized protein from Schizosaccharomyces pombe (strain 972 / ATCC 24843) (Fission yeast).